Here is a 236-residue protein sequence, read N- to C-terminus: MASSVDEEALHQLYLWVDNIPLSRPKRNLSRDFSDGVLVAEVIKFYFPKMVEMHNYVPANSLQQKLSNWGHLNRKVLKRLNFSVPDDVMRKIAQCAPGVVELVLIPLRQRLEERQRRRKQGAGSLQELAPQDGSGYMDVGVSQKARGEGVPDPQGGGQLSWDRPPAPRPPAYNRALQGDPSFVLQIAEKEQELLASQETVQVLQMKVRRLEHLLQLKNVRIEDLSRRLQQAERKQR.

One can recognise a Calponin-homology (CH) domain in the interval 7–112 (EEALHQLYLW…VLIPLRQRLE (106 aa)). A disordered region spans residues 115–176 (QRRRKQGAGS…PRPPAYNRAL (62 aa)). Positions 183-236 (VLQIAEKEQELLASQETVQVLQMKVRRLEHLLQLKNVRIEDLSRRLQQAERKQR) are essential for homodimerization and microtubule bundling activity.

In terms of assembly, homodimer. Interacts with actin, TJP1, CGN and CDH1. As to expression, expressed in the intestinal epithelial cells (at protein level).

The protein localises to the cytoplasm. Its subcellular location is the cell projection. The protein resides in the cilium. It localises to the flagellum. It is found in the cytoskeleton. The protein localises to the cilium axoneme. Its subcellular location is the apical cell membrane. The protein resides in the basolateral cell membrane. It localises to the stress fiber. It is found in the microvillus. The protein localises to the lamellipodium. Its subcellular location is the filopodium. Microtubule-associated protein involved in the stabilization of microtubules along the axis of migration during radial intercalation. Promotes the establishment and stabilization of an axis of microtubules required for the active migration of cells into the outer epithelium. Microtubule-associated protein that promotes microtubule bundling and stabilizes microtubules against depolymerization in response to cold shock. Essential for ciliary central apparatus formation which requires both its microtubule-binding and bundling activities and for ciliary localization of HYDIN and SPAG6 in ependymal cilia. Binds actin in intestinal epithelial cells (IECs), essential for IECs survival and contributes to formation of filopodia and lamellipodia in migrating IECs. Regulates planar cell polarity signaling pathway and asymmetric microtubule accumulation in ciliated epithelia. This is Sperm flagellar protein 1 (SPEF1) from Homo sapiens (Human).